We begin with the raw amino-acid sequence, 483 residues long: Low-density lipoprotein receptor-related protein 11 (483 aa).

A signal peptide spans 1–32 (MATRGGGPGPGFRHRALRGLLLLCLWLPGSRP). Topologically, residues 33–433 (GEPAAPSSGV…GGEHPAPEAG (401 aa)) are extracellular. Residues 85-172 (AVPDTIIRTQ…FAPLRGYRTY (88 aa)) form the MANSC domain. Residues asparagine 152 and asparagine 275 are each glycosylated (N-linked (GlcNAc...) asparagine). In terms of domain architecture, PKD spans 193–287 (PVSKAGKDVV…VTVLPRPYST (95 aa)). An LDL-receptor class A domain is found at 293 to 329 (ACSRYHFFCDSGCCIDIALACDGVRQCPDGSDEDFCQ). 3 cysteine pairs are disulfide-bonded: cysteine 294–cysteine 306, cysteine 301–cysteine 319, and cysteine 313–cysteine 328. Positions 346-428 (AQPGAMGLNE…KSGQAGGEHP (83 aa)) are disordered. Composition is skewed to polar residues over residues 367 to 376 (RATTHNQPAT) and 385 to 407 (HSTQKAPESQINPVQPDSNSSGK). N-linked (GlcNAc...) asparagine glycosylation occurs at asparagine 403. Basic and acidic residues predominate over residues 408–418 (NQEEGNYDLKS). The chain crosses the membrane as a helical span at residues 434 to 456 (AVLPLALGLAITVLLLLMVTCRL). Over 457-483 (RLVKQKLKKARPITSEESDYLINGMYL) the chain is Cytoplasmic. Residue serine 474 is modified to Phosphoserine.

This sequence belongs to the LDLR family.

It localises to the membrane. The protein is Low-density lipoprotein receptor-related protein 11 (Lrp11) of Mus musculus (Mouse).